The following is a 263-amino-acid chain: Hydroxyethylthiazole kinase (263 aa).

Substrate is bound at residue M39. The ATP site is built by K115 and T160. A substrate-binding site is contributed by G187.

The protein belongs to the Thz kinase family. Requires Mg(2+) as cofactor.

It catalyses the reaction 5-(2-hydroxyethyl)-4-methylthiazole + ATP = 4-methyl-5-(2-phosphooxyethyl)-thiazole + ADP + H(+). It functions in the pathway cofactor biosynthesis; thiamine diphosphate biosynthesis; 4-methyl-5-(2-phosphoethyl)-thiazole from 5-(2-hydroxyethyl)-4-methylthiazole: step 1/1. In terms of biological role, catalyzes the phosphorylation of the hydroxyl group of 4-methyl-5-beta-hydroxyethylthiazole (THZ). This Staphylococcus aureus (strain bovine RF122 / ET3-1) protein is Hydroxyethylthiazole kinase.